We begin with the raw amino-acid sequence, 517 residues long: GMP synthase [glutamine-hydrolyzing] (517 aa).

The Glutamine amidotransferase type-1 domain maps to 11-202; the sequence is KIIALDFGSQ…AFDVCGAKAN (192 aa). Cys-88 (nucleophile) is an active-site residue. Active-site residues include His-176 and Glu-178. One can recognise a GMPS ATP-PPase domain in the interval 203 to 392; sequence WTMDDFIDMQ…LGIPHELVWR (190 aa). ATP is bound at residue 230-236; the sequence is SGGVDSS.

Homodimer.

It carries out the reaction XMP + L-glutamine + ATP + H2O = GMP + L-glutamate + AMP + diphosphate + 2 H(+). It functions in the pathway purine metabolism; GMP biosynthesis; GMP from XMP (L-Gln route): step 1/1. In terms of biological role, catalyzes the synthesis of GMP from XMP. The polypeptide is GMP synthase [glutamine-hydrolyzing] (Limosilactobacillus reuteri (strain DSM 20016) (Lactobacillus reuteri)).